The following is a 2799-amino-acid chain: Peramine synthetase ppzA (2799 aa).

An adenylation 1 region spans residues 270–666 (QERCRLQPNA…VGRKDTQVKI (397 aa)). Positions 799–875 (QPLTGMERLL…DLSRQSRYIE (77 aa)) constitute a Carrier 1 domain. The residue at position 836 (Ser-836) is an O-(pantetheine 4'-phosphoryl)serine. The condensation stretch occupies residues 914–1327 (DAYPCTPLQE…ITILTTEDLE (414 aa)). Residues 1350-1743 (DKVQARPNAP…TLSFVRRKDT (394 aa)) form an adenylation 2 region. The segment at 1874-1970 (LEIGCGSGMM…EYLVKLIQDI (97 aa)) is methylation (Met) domain. The 79-residue stretch at 2290 to 2368 (SPTTDMEKEL…RLLLDCCCDD (79 aa)) folds into the Carrier 2 domain. Ser-2327 is modified (O-(pantetheine 4'-phosphoryl)serine). The segment at 2420-2737 (TVLLTGANGF…LADMLQDLED (318 aa)) is thiesterase (TE) domain.

Belongs to the NRP synthetase family. The cofactor is pantetheine 4'-phosphate.

It catalyses the reaction (S)-1-pyrroline-5-carboxylate + L-arginine + S-adenosyl-L-methionine + 2 ATP = peramine + 2 AMP + S-adenosyl-L-homocysteine + 2 diphosphate + H2O + 2 H(+). Its pathway is secondary metabolite biosynthesis. Nonribosomal peptide synthetase; part of the gene cluster that mediates the biosynthesis of pyrrolopyrazines, secondary metabolites showing insecticidal activity. The single multifunctional NRPS ppzA is responsible for the biosynthesis of peramine. The condensation domain of ppzA is proposed to catalyze formation of a peptide bond between 1-pyrroline-5-carboxylate and arginine. The methylation domain of ppzA would catalyze the N-methylation of the alpha-amino group of arginine. The reductase domain is proposed to be responsible for reduction of the thioester and the cyclization to form an iminium ion resulting in release from the peptide synthetase. Deprotonation of this intermediate and oxidation of the pyrroline ring would give rise to peramine. This final oxidation to give the pyrrole functionality may be spontaneous. In Epichloe species that produce only peramine, the peramine synthetase gene is not localized in a gene cluster, in contrast to Metarhizium species that contain additional pyrrolopyrazine biosynthesis genes. The 2-oxoglutarate-Fe(II) type oxidoreductase ppzC hydroxylates peramine to yield the newly identified compound 8-hydroxyperamine whereas ppzD converts L-proline into trans-4-hydroxy-L-proline, a precursor of peramine biosynthesis. This is Peramine synthetase ppzA from Metarhizium majus (strain ARSEF 297).